We begin with the raw amino-acid sequence, 427 residues long: MNTSHSKELFAKAQEIIPGGVNSPVRAFKSVGAEPVFIKKASGSTIIDADDNAYIDYVGSWGPMILGHCHPRIVASVQRATENGSSFGAPTELEITLAEMVVAAVPSIEMVRMVSSGTEATMSAIRLARGYTGRDKIIKFSGCYHGHADSLLVKAGSGAATFGVPDSPGVPRDFAQHTLTATFNDLESVEELICAHSREVACIIVEPIAGNMGTVPPRAGFLEGLREICTNEGIILIFDEVMTGFRVAYGGAQERYGITPDMTTLGKIIGGGLPVGAFGGKREIMQQLSPSGGVYQAGTLSGNPLAMTAGIETLKLLQEDGFYGRLEEKSRALAEGIADAARRAGYPIYSTRVGSMFCAFFTNGEVHDWTSAAMCDTKSFATFFRSMLEEGIYLAPSQFETAFVSIAHSSEDIEKTIAAAFSCFKKL.

An N6-(pyridoxal phosphate)lysine modification is found at K267.

The protein belongs to the class-III pyridoxal-phosphate-dependent aminotransferase family. HemL subfamily. Homodimer. The cofactor is pyridoxal 5'-phosphate.

The protein localises to the cytoplasm. The enzyme catalyses (S)-4-amino-5-oxopentanoate = 5-aminolevulinate. It functions in the pathway porphyrin-containing compound metabolism; protoporphyrin-IX biosynthesis; 5-aminolevulinate from L-glutamyl-tRNA(Glu): step 2/2. This chain is Glutamate-1-semialdehyde 2,1-aminomutase, found in Geobacter metallireducens (strain ATCC 53774 / DSM 7210 / GS-15).